Reading from the N-terminus, the 353-residue chain is S-adenosylmethionine:tRNA ribosyltransferase-isomerase (353 aa).

This sequence belongs to the QueA family. As to quaternary structure, monomer.

Its subcellular location is the cytoplasm. It catalyses the reaction 7-aminomethyl-7-carbaguanosine(34) in tRNA + S-adenosyl-L-methionine = epoxyqueuosine(34) in tRNA + adenine + L-methionine + 2 H(+). Its pathway is tRNA modification; tRNA-queuosine biosynthesis. In terms of biological role, transfers and isomerizes the ribose moiety from AdoMet to the 7-aminomethyl group of 7-deazaguanine (preQ1-tRNA) to give epoxyqueuosine (oQ-tRNA). The sequence is that of S-adenosylmethionine:tRNA ribosyltransferase-isomerase from Blochmanniella floridana.